Reading from the N-terminus, the 276-residue chain is NADPH-dependent 7-cyano-7-deazaguanine reductase (276 aa).

Position 83–85 (Ile-83–Ser-85) interacts with substrate. Ser-85–Lys-86 provides a ligand contact to NADPH. The Thioimide intermediate role is filled by Cys-184. The active-site Proton donor is the Asp-191. Residue His-223–Glu-224 coordinates substrate. Position 252-253 (Arg-252–Gly-253) interacts with NADPH.

This sequence belongs to the GTP cyclohydrolase I family. QueF type 2 subfamily. As to quaternary structure, homodimer.

It is found in the cytoplasm. It carries out the reaction 7-aminomethyl-7-carbaguanine + 2 NADP(+) = 7-cyano-7-deazaguanine + 2 NADPH + 3 H(+). Its pathway is tRNA modification; tRNA-queuosine biosynthesis. In terms of biological role, catalyzes the NADPH-dependent reduction of 7-cyano-7-deazaguanine (preQ0) to 7-aminomethyl-7-deazaguanine (preQ1). This Desulfotalea psychrophila (strain LSv54 / DSM 12343) protein is NADPH-dependent 7-cyano-7-deazaguanine reductase.